We begin with the raw amino-acid sequence, 776 residues long: Protein STRUBBELIG-RECEPTOR FAMILY 3 (776 aa).

The signal sequence occupies residues 1 to 29 (MAAKRSIYCLLLLPLLLSLLIWIPSISLA). Residues 30 to 35 (ATNPDD) are Cytoplasmic-facing. A helical membrane pass occupies residues 36–56 (VAAINGLFAALGAPVLPGWIA). Residues 57–316 (SGGDPCGEAW…KGKNSSHTKK (260 aa)) are Extracellular-facing. N72 is a glycosylation site (N-linked (GlcNAc...) asparagine). LRR repeat units follow at residues 99–120 (SIRG…TLPV), 121–143 (TLQH…LGTL), 145–167 (FLND…FQNL), 169–191 (GLIN…MENL), 193–215 (TLTT…QGLP), and 216–236 (LQDL…KLLS). N-linked (GlcNAc...) asparagine glycosylation occurs at N179. N-linked (GlcNAc...) asparagine glycans are attached at residues N248 and N253. Residues 251–311 (MINSTSTAPS…SSENSKGKNS (61 aa)) are disordered. A compositionally biased stretch (low complexity) spans 254–268 (STSTAPSLSPSLSPT). Residues 269–284 (KPAPTRPFSGVPPPPN) are compositionally biased toward pro residues. The segment covering 298 to 309 (SEGSSSENSKGK) has biased composition (low complexity). N310 carries an N-linked (GlcNAc...) asparagine glycan. The chain crosses the membrane as a helical span at residues 317–337 (IILIAFAGVLVFIILVLAILL). Over 338-776 (LLPKCARRRE…RHGSGDSTAD (439 aa)) the chain is Cytoplasmic. The interval 355 to 440 (PHQVGADRGS…PPPPPPPPPP (86 aa)) is disordered. The segment covering 381 to 407 (RSEKVQREPFKKAGEEPKVLHDLERLR) has biased composition (basic and acidic residues). Over residues 426 to 440 (MPPPPPPPPPPPPPP) the composition is skewed to pro residues. The region spanning 485-763 (FAQENLIGSG…EVVQDLLDMI (279 aa)) is the Protein kinase domain. ATP is bound by residues 491 to 499 (IGSGMLGSV) and K513.

Belongs to the protein kinase superfamily. Ser/Thr protein kinase family. In terms of tissue distribution, expressed in seedlings, roots, stems, leaves, flowers and siliques.

The protein localises to the membrane. In terms of biological role, not essential for epidermal patterning and not redundant with STRUBBELIG. This chain is Protein STRUBBELIG-RECEPTOR FAMILY 3 (SRF3), found in Arabidopsis thaliana (Mouse-ear cress).